A 45-amino-acid chain; its full sequence is Large ribosomal subunit protein bL34 (45 aa).

The disordered stretch occupies residues 23 to 45 (ETPGGKKVLSARRAKGRKNLIAK). Positions 31-45 (LSARRAKGRKNLIAK) are enriched in basic residues.

It belongs to the bacterial ribosomal protein bL34 family.

The protein is Large ribosomal subunit protein bL34 of Elusimicrobium minutum (strain Pei191).